Reading from the N-terminus, the 404-residue chain is Ubiquitin-like modifier-activating enzyme 5 (404 aa).

Ser45 bears the Phosphoserine mark. Gly83, Asp104, Lys127, Asn150, and Asn184 together coordinate ATP. 2 residues coordinate Zn(2+): Cys226 and Cys229. Cys250 acts as the Glycyl thioester intermediate in catalysis. Positions 303 and 308 each coordinate Zn(2+). The UFM1-interacting sequence (UIS) motif lies at 334-346 (IIHEDNEWGIELV). Residues 347 to 377 (SEISEEELKKSSGPIPDLPEGIIVAYTVPQK) form a linker region. 2 positions are modified to phosphoserine: Ser358 and Ser393. The UFC1-binding sequence (UFC) signature appears at 389–404 (DSGESLEDLMAKMKNI).

It belongs to the ubiquitin-activating E1 family. UBA5 subfamily. As to quaternary structure, homodimer; homodimerization is required for UFM1 activation. Interacts (via UIS motif) with UFM1; binds UFM1 via a trans-binding mechanism in which UFM1 interacts with distinct sites in both subunits of the UBA5 homodimer. Interacts (via C-terminus) with UFC1. Interacts (via UIS motif) with GABARAPL2 and, with lower affinity, with GABARAP and GABARAPL1.

Its subcellular location is the cytoplasm. The protein resides in the nucleus. The protein localises to the endoplasmic reticulum membrane. It localises to the golgi apparatus. Functionally, E1-like enzyme which specifically catalyzes the first step in ufmylation. Activates UFM1 by first adenylating its C-terminal glycine residue with ATP, and thereafter linking this residue to the side chain of a cysteine residue in E1, yielding a UFM1-E1 thioester and free AMP. Activates UFM1 via a trans-binding mechanism, in which UFM1 interacts with distinct sites in both subunits of the UBA5 homodimer. Trans-binding also promotes stabilization of the UBA5 homodimer, and enhances ATP-binding. Transfer of UFM1 from UBA5 to the E2-like enzyme UFC1 also takes place using a trans mechanism. Ufmylation plays a key role in various processes, such as ribosome recycling, response to DNA damage, interferon response or reticulophagy (also called ER-phagy). Ufmylation is essential for erythroid differentiation of both megakaryocytes and erythrocytes. In Bos taurus (Bovine), this protein is Ubiquitin-like modifier-activating enzyme 5.